The primary structure comprises 98 residues: Thrombin-like enzyme cerastotin (98 aa).

The Peptidase S1 domain maps to 1-98; sequence VIGGAECNIN…IKKPVNGSTH (98 aa). Active-site charge relay system residues include H41 and D85. N94 carries N-linked (GlcNAc...) asparagine glycosylation.

Belongs to the peptidase S1 family. Snake venom subfamily. In terms of assembly, monomer. In terms of tissue distribution, expressed by the venom gland.

It localises to the secreted. With respect to regulation, inhibited by PMSF. Its function is as follows. Thrombin-like snake venom serine protease that preferentially cleaves the alpha-chain of fibrinogen (FGA). Induce platelet aggregation in the presence of exogenous fibrinogen. Possesses esterase and amidolytic activities. The polypeptide is Thrombin-like enzyme cerastotin (Cerastes cerastes (Horned desert viper)).